The primary structure comprises 1012 residues: Beta-alanine-activating enzyme (1012 aa).

ATP contacts are provided by residues 177–185 (TTGTTGKPK), Asp-411, Arg-426, and Lys-516.

It belongs to the ATP-dependent AMP-binding enzyme family.

Its function is as follows. Covalently binds beta-alanine in an ATP-dependent manner to form a thioester bond with its phosphopantetheine group and transfers it to an, as yet, unknown acceptor. May be required for a post-translational protein modification or for post-transcriptional modification of an RNA. This Drosophila melanogaster (Fruit fly) protein is Beta-alanine-activating enzyme.